The primary structure comprises 399 residues: STOREKEEPER protein (399 aa).

Disordered regions lie at residues 1–160 (MAPK…RSLW) and 250–301 (GISN…EEQQ). The span at 20 to 54 (EEQELVEESQEEEEQQSREEEGEEESGEETEEDEE) shows a compositional bias: acidic residues. Over residues 69 to 79 (KLVQTPQKPQF) the composition is skewed to polar residues. 2 stretches are compositionally biased toward low complexity: residues 80 to 100 (SSESGSENGSGSDSEAESGNS) and 116 to 125 (AAKAATPSKP). Composition is skewed to basic and acidic residues over residues 143–152 (KIAEEEEKKS) and 270–299 (KTVEVKKSSEPKKSAKVSKPKDDEKQKEEE).

Belongs to the GeBP family. Expressed in tubers and in leaves treated with sucrose.

The protein localises to the nucleus. Its function is as follows. May act as a transcriptional regulator. Binds specifically to the B-box motif, a promoter element that is required for the tuber-specific and sucrose inducible expression of the patatin gene. The polypeptide is STOREKEEPER protein (Solanum tuberosum (Potato)).